The chain runs to 119 residues: Holo-[acyl-carrier-protein] synthase (119 aa).

Mg(2+) is bound by residues Asp5 and Glu51.

The protein belongs to the P-Pant transferase superfamily. AcpS family. Requires Mg(2+) as cofactor.

The protein localises to the cytoplasm. It carries out the reaction apo-[ACP] + CoA = holo-[ACP] + adenosine 3',5'-bisphosphate + H(+). Transfers the 4'-phosphopantetheine moiety from coenzyme A to a Ser of acyl-carrier-protein. The chain is Holo-[acyl-carrier-protein] synthase from Helicobacter pylori (strain HPAG1).